Reading from the N-terminus, the 699-residue chain is LMBR1 domain-containing protein 2 homolog (699 aa).

Topologically, residues methionine 1–tyrosine 3 are extracellular. A helical membrane pass occupies residues leucine 4–isoleucine 26. Topologically, residues proline 27 to histidine 30 are cytoplasmic. A helical transmembrane segment spans residues isoleucine 31–isoleucine 51. Residues proline 52 to arginine 106 lie on the Extracellular side of the membrane. The N-linked (GlcNAc...) asparagine glycan is linked to asparagine 76. A helical transmembrane segment spans residues isoleucine 107–leucine 127. The Cytoplasmic portion of the chain corresponds to lysine 128–glutamate 144. A helical transmembrane segment spans residues asparagine 145 to valine 165. Topologically, residues lysine 166–serine 181 are extracellular. A helical transmembrane segment spans residues alanine 182–valine 202. Over proline 203–lysine 381 the chain is Cytoplasmic. A helical membrane pass occupies residues threonine 382–phenylalanine 402. Over serine 403–threonine 426 the chain is Extracellular. A helical membrane pass occupies residues isoleucine 427–leucine 447. Topologically, residues arginine 448–serine 467 are cytoplasmic. Residues leucine 468–glycine 488 traverse the membrane as a helical segment. Residues leucine 489–aspartate 514 are Extracellular-facing. A helical membrane pass occupies residues valine 515–cysteine 535. The Cytoplasmic portion of the chain corresponds to leucine 536 to valine 699. Residues glutamate 564–aspartate 592 adopt a coiled-coil conformation. The disordered stretch occupies residues phenylalanine 669–valine 699.

It belongs to the LIMR family.

The protein resides in the membrane. The chain is LMBR1 domain-containing protein 2 homolog from Drosophila pseudoobscura pseudoobscura (Fruit fly).